The chain runs to 426 residues: Dihydroorotase (426 aa).

Zn(2+) is bound by residues histidine 58 and histidine 60. Residues 60–62 (HLR) and asparagine 92 each bind substrate. The Zn(2+) site is built by aspartate 150, histidine 177, and histidine 230. Residue asparagine 276 coordinates substrate. Aspartate 303 provides a ligand contact to Zn(2+). Aspartate 303 is an active-site residue. Substrate is bound by residues histidine 307 and 321–322 (FG).

The protein belongs to the metallo-dependent hydrolases superfamily. DHOase family. Class I DHOase subfamily. The cofactor is Zn(2+).

The enzyme catalyses (S)-dihydroorotate + H2O = N-carbamoyl-L-aspartate + H(+). It participates in pyrimidine metabolism; UMP biosynthesis via de novo pathway; (S)-dihydroorotate from bicarbonate: step 3/3. In terms of biological role, catalyzes the reversible cyclization of carbamoyl aspartate to dihydroorotate. This chain is Dihydroorotase, found in Listeria monocytogenes serotype 4b (strain F2365).